Reading from the N-terminus, the 174-residue chain is Ribosome maturation factor RimM (174 aa).

The PRC barrel domain maps to 101–174 (AGEFYLADLC…IELLQRWILE (74 aa)).

The protein belongs to the RimM family. As to quaternary structure, binds ribosomal protein uS19.

It localises to the cytoplasm. In terms of biological role, an accessory protein needed during the final step in the assembly of 30S ribosomal subunit, possibly for assembly of the head region. Essential for efficient processing of 16S rRNA. May be needed both before and after RbfA during the maturation of 16S rRNA. It has affinity for free ribosomal 30S subunits but not for 70S ribosomes. The polypeptide is Ribosome maturation factor RimM (Treponema pallidum (strain Nichols)).